Here is a 586-residue protein sequence, read N- to C-terminus: Nucleus accumbens-associated protein 2 (586 aa).

The 65-residue stretch at 30-94 folds into the BTB domain; the sequence is CDVSIVVKGQ…CYTGKLTMAA (65 aa). Residue lysine 171 forms a Glycyl lysine isopeptide (Lys-Gly) (interchain with G-Cter in SUMO2) linkage. The segment at 177-196 is disordered; it reads MPPASGPGLASKRPLETGPR. Lysine 215 participates in a covalent cross-link: Glycyl lysine isopeptide (Lys-Gly) (interchain with G-Cter in SUMO2). Residues 236–272 are disordered; the sequence is QVPYPPGERTSPGASSLPTTDSPTSYHNEEDEEDDEA. Positions 247-261 are enriched in polar residues; the sequence is PGASSLPTTDSPTSY. Glycyl lysine isopeptide (Lys-Gly) (interchain with G-Cter in SUMO2) cross-links involve residues lysine 297, lysine 427, and lysine 454. The region spanning 349–446 is the BEN domain; it reads GSGVYITRGQ…DMCTNARRVR (98 aa). A disordered region spans residues 542 to 586; sequence APEQLPADGQSSPQAFEQGNTSSSRPQTPVATATRRPEGTYAGTL. Residues 550 to 572 are compositionally biased toward polar residues; sequence GQSSPQAFEQGNTSSSRPQTPVA.

In terms of assembly, homooligomer; mediated by the BTB domain. Interacts with the NuRD complex. Interacts (via C-terminal part) with HDAC2. Interacts (via BTB domain) with MTA1, MTA2 and MTA3.

The protein resides in the nucleus. Functions as a transcriptional repressor through its association with the NuRD complex. Recruits the NuRD complex to the promoter of MDM2, leading to the repression of MDM2 transcription and subsequent stability of p53/TP53. This is Nucleus accumbens-associated protein 2 (Nacc2) from Mus musculus (Mouse).